The following is a 192-amino-acid chain: uncharacterized protein (192 aa).

A B12-binding domain is found at 72–192 (GATVLLIVPP…SLVISEFSLV (121 aa)).

This is an uncharacterized protein from Rhodobacter capsulatus (Rhodopseudomonas capsulata).